A 413-amino-acid polypeptide reads, in one-letter code: MDHLKRQDEKVFAAIEAELGRQRSKIELIASENFVSEAVMEAQGSVLTNKYAEGYPGKRYYGGCEHVDVVEDIARDRVKEIFGAEHVNVQPHSGAQANMAVYFTILEQGDTVLGMNLSHGGHLTHGSPVNFSGVQYNFVEYGVDAESHRINYDDVLAKAKEHKPKLIVAGASAYPRVIDFKRFREIADEVGAYLMVDMAHIAGLVAAGLHPNPVPHAHFVTTTTHKTLRGPRGGMILCEEQFAKQIDKSIFPGIQGGPLMHVIAAKAVAFGEALQDDFKTYAQNIINNANRLAEGLQKEGLTLVSGGTDNHLILIDVRNLEITGKVAEHVLDEVGITVNKNTIPFETASPFVTSGVRIGTAAVTSRGFGLEEMDEIASLIAYTLKNHENEAALEEARKRVEALTSKFPMYTDL.

(6S)-5,6,7,8-tetrahydrofolate-binding positions include Leu117 and 121–123 (GHL). Lys226 carries the N6-(pyridoxal phosphate)lysine modification. (6S)-5,6,7,8-tetrahydrofolate is bound by residues Glu239 and 349–351 (SPF).

It belongs to the SHMT family. As to quaternary structure, homodimer. Requires pyridoxal 5'-phosphate as cofactor.

The protein resides in the cytoplasm. It catalyses the reaction (6R)-5,10-methylene-5,6,7,8-tetrahydrofolate + glycine + H2O = (6S)-5,6,7,8-tetrahydrofolate + L-serine. Its pathway is one-carbon metabolism; tetrahydrofolate interconversion. The protein operates within amino-acid biosynthesis; glycine biosynthesis; glycine from L-serine: step 1/1. Catalyzes the reversible interconversion of serine and glycine with tetrahydrofolate (THF) serving as the one-carbon carrier. This reaction serves as the major source of one-carbon groups required for the biosynthesis of purines, thymidylate, methionine, and other important biomolecules. Also exhibits THF-independent aldolase activity toward beta-hydroxyamino acids, producing glycine and aldehydes, via a retro-aldol mechanism. The sequence is that of Serine hydroxymethyltransferase from Bacillus cereus (strain ATCC 10987 / NRS 248).